Here is a 372-residue protein sequence, read N- to C-terminus: Pyrimidine monooxygenase RutA (372 aa).

Residues Ile57–Lys58, Asn123, Glu132, Arg148–Tyr149, and Ser198 contribute to the FMN site.

Belongs to the NtaA/SnaA/DszA monooxygenase family. RutA subfamily.

The enzyme catalyses uracil + FMNH2 + NADH + O2 = (Z)-3-ureidoacrylate + FMN + NAD(+) + H2O + H(+). It catalyses the reaction thymine + FMNH2 + NADH + O2 = (Z)-2-methylureidoacrylate + FMN + NAD(+) + H2O + H(+). Catalyzes the pyrimidine ring opening between N-3 and C-4 by an unusual flavin hydroperoxide-catalyzed mechanism, adding oxygen atoms in the process to yield ureidoacrylate peracid, that immediately reacts with FMN forming ureidoacrylate and FMN-N(5)-oxide. The FMN-N(5)-oxide reacts spontaneously with NADH to produce FMN. Requires the flavin reductase RutF to regenerate FMN in vivo. This chain is Pyrimidine monooxygenase RutA, found in Methylorubrum extorquens (strain PA1) (Methylobacterium extorquens).